Consider the following 348-residue polypeptide: L-threonine 3-dehydrogenase (348 aa).

Cys42 provides a ligand contact to Zn(2+). Active-site charge relay system residues include Thr44 and His47. 6 residues coordinate Zn(2+): His67, Glu68, Cys97, Cys100, Cys103, and Cys111. NAD(+) is bound by residues Leu179, Glu199, Arg204, 266–268 (LGL), and 291–292 (IT).

The protein belongs to the zinc-containing alcohol dehydrogenase family. As to quaternary structure, homotetramer. Zn(2+) serves as cofactor.

It is found in the cytoplasm. It catalyses the reaction L-threonine + NAD(+) = (2S)-2-amino-3-oxobutanoate + NADH + H(+). The protein operates within amino-acid degradation; L-threonine degradation via oxydo-reductase pathway; glycine from L-threonine: step 1/2. Its function is as follows. Catalyzes the NAD(+)-dependent oxidation of L-threonine to 2-amino-3-ketobutyrate. To a lesser extent, also catalyzes the oxidation of L-serine, D-threonine, butan-2,3-diol, butan-1,2-diol, and propan-1,2-diol and cannot oxidize other L-amino acids. Cannot utilize NADP(H) instead of NAD(H). The polypeptide is L-threonine 3-dehydrogenase (Pyrococcus furiosus (strain ATCC 43587 / DSM 3638 / JCM 8422 / Vc1)).